We begin with the raw amino-acid sequence, 232 residues long: Two-component response regulator ORR4 (232 aa).

The 137-residue stretch at 11–147 folds into the Response regulatory domain; that stretch reads HVLAVDDSLI…DMKKLKSHLL (137 aa). At Asp80 the chain carries 4-aspartylphosphate. Disordered stretches follow at residues 153–174 and 202–232; these read LPMA…AASA and AAAM…AVET. The span at 209–232 shows a compositional bias: polar residues; it reads VISSPDQRTKPRLSSTSSGLAVET.

It belongs to the ARR family. Type-A subfamily. Post-translationally, two-component system major event consists of a His-to-Asp phosphorelay between a sensor histidine kinase (HK) and a response regulator (RR). In plants, the His-to-Asp phosphorelay involves an additional intermediate named Histidine-containing phosphotransfer protein (HPt). This multistep phosphorelay consists of a His-Asp-His-Asp sequential transfer of a phosphate group between first a His and an Asp of the HK protein, followed by the transfer to a conserved His of the HPt protein and finally the transfer to an Asp in the receiver domain of the RR protein. In terms of tissue distribution, expressed in mature leaves and flowers, and at low levels in roots and shoots.

Functionally, functions as a response regulator involved in His-to-Asp phosphorelay signal transduction system. Phosphorylation of the Asp residue in the receiver domain activates the ability of the protein to promote the transcription of target genes. Type-A response regulators seem to act as negative regulators of the cytokinin signaling. This chain is Two-component response regulator ORR4, found in Oryza sativa subsp. indica (Rice).